A 525-amino-acid polypeptide reads, in one-letter code: GMP synthase [glutamine-hydrolyzing] (525 aa).

A Glutamine amidotransferase type-1 domain is found at 13–202 (TILVLDFGSQ…AVEICQAAQT (190 aa)). C89 functions as the Nucleophile in the catalytic mechanism. Residues H176 and E178 contribute to the active site. Positions 203 to 400 (WTMENFIDTE…LGISHELVWR (198 aa)) constitute a GMPS ATP-PPase domain. 231–237 (SGGVDST) is a binding site for ATP. Residues R304, D462, K517, and E523 each coordinate XMP.

Homodimer. The cofactor is Mg(2+).

It is found in the cytoplasm. The protein resides in the cytosol. It carries out the reaction XMP + L-glutamine + ATP + H2O = GMP + L-glutamate + AMP + diphosphate + 2 H(+). It functions in the pathway purine metabolism; GMP biosynthesis; GMP from XMP (L-Gln route): step 1/1. Its function is as follows. Catalyzes the conversion of xanthine monophosphate (XMP) to GMP in the presence of glutamine and ATP through an adenyl-XMP intermediate. This Eremothecium gossypii (strain ATCC 10895 / CBS 109.51 / FGSC 9923 / NRRL Y-1056) (Yeast) protein is GMP synthase [glutamine-hydrolyzing] (GUA1).